The following is a 69-amino-acid chain: Putative membrane protein insertion efficiency factor (69 aa).

The protein belongs to the UPF0161 family.

The protein resides in the cell membrane. Could be involved in insertion of integral membrane proteins into the membrane. The chain is Putative membrane protein insertion efficiency factor from Clostridium kluyveri (strain NBRC 12016).